A 691-amino-acid polypeptide reads, in one-letter code: UvrABC system protein C (691 aa).

The GIY-YIG domain occupies 20–97 (STSGVYLWKD…IKKHTPRYNI (78 aa)). A UVR domain is found at 204-239 (DATVARLEKRMKRAVRQEAFEAAARIRDDIQAIRCI). The tract at residues 662 to 691 (RSTTAPVREEYKEHEHDPQGESPGPGRKTD) is disordered. Positions 668–680 (VREEYKEHEHDPQ) are enriched in basic and acidic residues.

This sequence belongs to the UvrC family. As to quaternary structure, interacts with UvrB in an incision complex.

It localises to the cytoplasm. Its function is as follows. The UvrABC repair system catalyzes the recognition and processing of DNA lesions. UvrC both incises the 5' and 3' sides of the lesion. The N-terminal half is responsible for the 3' incision and the C-terminal half is responsible for the 5' incision. The chain is UvrABC system protein C from Treponema pallidum (strain Nichols).